A 330-amino-acid chain; its full sequence is D-lactate dehydrogenase (330 aa).

Residues 156–157 (RI), Asp-176, 206–207 (VP), 233–235 (AAR), and Asp-259 each bind NAD(+). Arg-235 is a catalytic residue. The active site involves Glu-264. The Proton donor role is filled by His-296.

This sequence belongs to the D-isomer specific 2-hydroxyacid dehydrogenase family.

It carries out the reaction (R)-lactate + NAD(+) = pyruvate + NADH + H(+). The chain is D-lactate dehydrogenase (ldhD) from Staphylococcus epidermidis (strain ATCC 35984 / DSM 28319 / BCRC 17069 / CCUG 31568 / BM 3577 / RP62A).